The following is a 215-amino-acid chain: Ribosomal RNA small subunit methyltransferase G (215 aa).

S-adenosyl-L-methionine-binding positions include G77, F82, 130–131 (IE), and R146.

The protein belongs to the methyltransferase superfamily. RNA methyltransferase RsmG family.

It is found in the cytoplasm. The catalysed reaction is guanosine(527) in 16S rRNA + S-adenosyl-L-methionine = N(7)-methylguanosine(527) in 16S rRNA + S-adenosyl-L-homocysteine. Specifically methylates the N7 position of guanine in position 527 of 16S rRNA. The polypeptide is Ribosomal RNA small subunit methyltransferase G (Bartonella henselae (strain ATCC 49882 / DSM 28221 / CCUG 30454 / Houston 1) (Rochalimaea henselae)).